Here is a 148-residue protein sequence, read N- to C-terminus: 3-hydroxyacyl-[acyl-carrier-protein] dehydratase FabZ (148 aa).

His-48 is an active-site residue.

It belongs to the thioester dehydratase family. FabZ subfamily.

Its subcellular location is the cytoplasm. The enzyme catalyses a (3R)-hydroxyacyl-[ACP] = a (2E)-enoyl-[ACP] + H2O. In terms of biological role, involved in unsaturated fatty acids biosynthesis. Catalyzes the dehydration of short chain beta-hydroxyacyl-ACPs and long chain saturated and unsaturated beta-hydroxyacyl-ACPs. The chain is 3-hydroxyacyl-[acyl-carrier-protein] dehydratase FabZ from Campylobacter fetus subsp. fetus (strain 82-40).